Consider the following 551-residue polypeptide: Tripartite motif-containing protein 5 (551 aa).

A2 is modified (N-acetylalanine). Residues 15–55 (CPICLELLTEPLSLDCGHSFCQACITANHKESRERSCPLCR) form an RING-type zinc finger. At S82 the chain carries Phosphoserine. Residues 87–128 (QKVDRCARHGEKLLLFCQQHGNVICWLCERSEEHRGHRTSLV) form a B box-type zinc finger. Residues C92, H95, C114, and H120 each coordinate Zn(2+). The stretch at 127 to 221 (LVEEVAQKYR…VQSENDMVLQ (95 aa)) forms a coiled coil. The required for interaction with GABARAP and for autophagy stretch occupies residues 182–195 (FKQLRDILDCEESN). In terms of domain architecture, B30.2/SPRY spans 276 to 551 (PDLKGMLQVF…LPMTLCSPSS (276 aa)).

This sequence belongs to the TRIM/RBCC family. Can form homodimers and homotrimers. In addition to lower-order dimerization, also exhibits a higher-order multimerization and both low- and high-order multimerizations are essential for its restriction activity. Interacts with BTBD1 and BTBD2. Interacts with PSMC4, PSMC5, PSMD7 and HSPA8/HSC70. Interacts (via B30.2/SPRY domain) with HSPA1A/B. Interacts with PSMC2, MAP3K7/TAK1, TAB2 and TAB3. Interacts with SQSTM1. Interacts with TRIM6 and TRIM34. Interacts with ULK1 (phosphorylated form), GABARAP, GABARAPL1, GABARAPL2, MAP1LC3A, MAP1LC3C and BECN1. Post-translationally, degraded in a proteasome-independent fashion in the absence of viral infection but in a proteasome-dependent fashion following exposure to restriction sensitive virus. In terms of processing, autoubiquitinated in a RING finger- and UBE2D2-dependent manner. Monoubiquitinated by TRIM21. Deubiquitinated by Yersinia YopJ. Ubiquitination may not lead to proteasomal degradation.

The protein localises to the cytoplasm. The protein resides in the nucleus. The enzyme catalyses S-ubiquitinyl-[E2 ubiquitin-conjugating enzyme]-L-cysteine + [acceptor protein]-L-lysine = [E2 ubiquitin-conjugating enzyme]-L-cysteine + N(6)-ubiquitinyl-[acceptor protein]-L-lysine.. The protein operates within protein modification; protein ubiquitination. Capsid-specific restriction factor that prevents infection from non-host-adapted retroviruses. Blocks viral replication early in the life cycle, after viral entry but before reverse transcription. In addition to acting as a capsid-specific restriction factor, also acts as a pattern recognition receptor that activates innate immune signaling in response to the retroviral capsid lattice. Binding to the viral capsid triggers its E3 ubiquitin ligase activity, and in concert with the heterodimeric ubiquitin conjugating enzyme complex UBE2V1-UBE2N (also known as UBC13-UEV1A complex) generates 'Lys-63'-linked polyubiquitin chains, which in turn are catalysts in the autophosphorylation of the MAP3K7/TAK1 complex (includes TAK1, TAB2, and TAB3). Activation of the MAP3K7/TAK1 complex by autophosphorylation results in the induction and expression of NF-kappa-B and MAPK-responsive inflammatory genes, thereby leading to an innate immune response in the infected cell. Plays a role in regulating autophagy through activation of autophagy regulator BECN1 by causing its dissociation from its inhibitors BCL2 and TAB2. The polypeptide is Tripartite motif-containing protein 5 (TRIM5) (Alouatta sara (Bolivian red howler monkey)).